The sequence spans 457 residues: Protein translocase subunit SecY (457 aa).

A run of 10 helical transmembrane segments spans residues 17-37 (IFFT…PVPG), 75-95 (IALG…LVVF), 120-140 (LFTL…ALRM), 163-183 (VFYL…MWIG), 195-215 (ISLI…GSIF), 230-250 (IVSL…TVLI), 287-307 (VIPV…GQFL), 326-346 (VVYS…WTAT), 386-406 (LLGA…GRIL), and 412-432 (VSYF…LDTM).

It belongs to the SecY/SEC61-alpha family. Component of the Sec protein translocase complex. Heterotrimer consisting of SecY, SecE and SecG subunits. The heterotrimers can form oligomers, although 1 heterotrimer is thought to be able to translocate proteins. Interacts with the ribosome. Interacts with SecDF, and other proteins may be involved. Interacts with SecA.

It is found in the cell inner membrane. Functionally, the central subunit of the protein translocation channel SecYEG. Consists of two halves formed by TMs 1-5 and 6-10. These two domains form a lateral gate at the front which open onto the bilayer between TMs 2 and 7, and are clamped together by SecE at the back. The channel is closed by both a pore ring composed of hydrophobic SecY resides and a short helix (helix 2A) on the extracellular side of the membrane which forms a plug. The plug probably moves laterally to allow the channel to open. The ring and the pore may move independently. The chain is Protein translocase subunit SecY from Chlamydia muridarum (strain MoPn / Nigg).